Reading from the N-terminus, the 332-residue chain is T-cell surface glycoprotein CD1b2 (332 aa).

Residues 1–17 (MLLLVLALLAVLFPAGD) form the signal peptide. The Extracellular segment spans residues 18 to 301 (TQDAFPEPIS…ILYWGNSSIG (284 aa)). Asn-38, Asn-75, and Asn-146 each carry an N-linked (GlcNAc...) asparagine glycan. Intrachain disulfides connect Cys-120–Cys-184, Cys-149–Cys-163, and Cys-224–Cys-279. The Ig-like domain maps to 185–295 (PRYLMSVLEA…LGGQDIILYW (111 aa)). A glycan (N-linked (GlcNAc...) asparagine) is linked at Asn-297. Residues 302-322 (WIILAVFVSCLIVLLFYVLWF) form a helical membrane-spanning segment. The Cytoplasmic segment spans residues 323–332 (YKHWSYQDIL). An Internalization signal motif is present at residues 328–331 (YQDI).

As to quaternary structure, heterodimer with B2M (beta-2-microglobulin). Interacts with saposin C.

The protein resides in the cell membrane. It is found in the endosome membrane. It localises to the lysosome membrane. Its function is as follows. Antigen-presenting protein that binds self and non-self lipid and glycolipid antigens and presents them to T-cell receptors on natural killer T-cells. This is T-cell surface glycoprotein CD1b2 (CD1B2) from Cavia porcellus (Guinea pig).